Here is a 114-residue protein sequence, read N- to C-terminus: Probable 4-amino-4-deoxy-L-arabinose-phosphoundecaprenol flippase subunit ArnE (114 aa).

The next 3 membrane-spanning stretches (helical) occupy residues 38 to 58, 64 to 84, and 94 to 114; these read LTLR…LLWL, LPLS…TLAA, and LRHW…SWHL. Positions 43–112 constitute an EamA domain; it reads LAIAVVSLGL…IIFGILLMSW (70 aa).

Belongs to the ArnE family. As to quaternary structure, heterodimer of ArnE and ArnF.

The protein resides in the cell inner membrane. The protein operates within bacterial outer membrane biogenesis; lipopolysaccharide biosynthesis. Functionally, translocates 4-amino-4-deoxy-L-arabinose-phosphoundecaprenol (alpha-L-Ara4N-phosphoundecaprenol) from the cytoplasmic to the periplasmic side of the inner membrane. This chain is Probable 4-amino-4-deoxy-L-arabinose-phosphoundecaprenol flippase subunit ArnE, found in Yersinia pseudotuberculosis serotype O:1b (strain IP 31758).